A 253-amino-acid chain; its full sequence is RAD51-associated protein 1 (253 aa).

The interval 32–51 is interaction with DNA; sequence APLTKKSRTQPKEPKKENKK. 3 disordered regions span residues 33–74, 141–169, and 184–244; these read PLTK…TSLD, DREH…EGND, and KKIK…WVPP. Positions 154–169 are enriched in acidic residues; that stretch reads PDEESEEDSDYREGND. Basic residues predominate over residues 184 to 195; that stretch reads KKIKRQTRKEKK. Positions 190-241 are interaction with DNA; sequence TRKEKKTPKSENNTTVMELKSEQTQKMMSTSSEPVGRPLYTSSPVTNKKPKW. The span at 199–222 shows a compositional bias: polar residues; sequence SENNTTVMELKSEQTQKMMSTSSE.

As to quaternary structure, monomer.

It localises to the chromosome. The protein resides in the nucleus. Functionally, structure-specific DNA-binding protein involved in DNA repair by promoting RAD51-mediated homologous recombination. Acts by stimulating D-Loop formation by RAD51: specifically enhances joint molecule formation through its structure-specific DNA interaction and its interaction with RAD51. Binds single-stranded DNA (ssDNA), double-stranded DNA (dsDNA) and secondary DNA structures, such as D-loop structures: has a strong preference for branched-DNA structures that are obligatory intermediates during joint molecule formation. Involved in mitotic recombination-dependent replication fork processing. Also involved in meiosis by promoting DMC1-mediated homologous meiotic recombination. The protein is RAD51-associated protein 1 of Gallus gallus (Chicken).